The chain runs to 229 residues: Uracil-DNA glycosylase (229 aa).

Asp64 acts as the Proton acceptor in catalysis.

It belongs to the uracil-DNA glycosylase (UDG) superfamily. UNG family.

It is found in the cytoplasm. It carries out the reaction Hydrolyzes single-stranded DNA or mismatched double-stranded DNA and polynucleotides, releasing free uracil.. Functionally, excises uracil residues from the DNA which can arise as a result of misincorporation of dUMP residues by DNA polymerase or due to deamination of cytosine. The protein is Uracil-DNA glycosylase of Escherichia coli O45:K1 (strain S88 / ExPEC).